Reading from the N-terminus, the 236-residue chain is uncharacterized protein (236 aa).

The RPE1 insert domain occupies 117–160 (RYLSKQTDRNEFITTAESYIGISKHKSTNITYKLPLKEQFCNMS).

This is an uncharacterized protein from Rickettsia prowazekii (strain Madrid E).